The primary structure comprises 38 residues: Large ribosomal subunit protein bL36 (38 aa).

Belongs to the bacterial ribosomal protein bL36 family.

This chain is Large ribosomal subunit protein bL36, found in Chlorobium limicola (strain DSM 245 / NBRC 103803 / 6330).